The chain runs to 500 residues: Xylan O-acetyltransferase 2 (500 aa).

Topologically, residues 1-25 (MGLPGRRNPLLSARRAAASLRRSRR) are cytoplasmic. A helical; Signal-anchor for type II membrane protein membrane pass occupies residues 26–43 (LPVYVAAVFFVASVLLMF). At 44–500 (RDEILYLTTA…RPPAAAGHVA (457 aa)) the chain is on the lumenal side. The segment at 84-116 (PVLLGHGGKPEKHHSVTERHRPKVSAKRRPNKK) is disordered. The segment covering 91–102 (GKPEKHHSVTER) has biased composition (basic and acidic residues). The segment covering 103–116 (HRPKVSAKRRPNKK) has biased composition (basic residues). 4 disulfide bridges follow: Cys-143–Cys-194, Cys-165–Cys-231, Cys-174–Cys-472, and Cys-388–Cys-468. Residues Asn-144 and Asn-154 are each glycosylated (N-linked (GlcNAc...) asparagine). Positions 218–220 (GDS) match the GDS motif motif. The active-site Nucleophile is the Ser-220. Asn-260 and Asn-416 each carry an N-linked (GlcNAc...) asparagine glycan. Asp-467 acts as the Proton donor in catalysis. The short motif at 467–470 (DCIH) is the DXXH motif element. The active-site Proton acceptor is the His-470.

This sequence belongs to the PC-esterase family. TBL subfamily. As to expression, expressed at low levels in roots and leaves.

The protein resides in the golgi apparatus membrane. In terms of biological role, xylan acetyltransferase required for 2-O- and 3-O-monoacetylation of xylosyl residues in xylan. Catalyzes the 2-O-acetylation of xylan, followed by nonenzymatic acetyl migration to the O-3 position, resulting in products that are monoacetylated at both O-2 and O-3 positions. The chain is Xylan O-acetyltransferase 2 from Oryza sativa subsp. japonica (Rice).